The sequence spans 416 residues: Gamma-glutamyl phosphate reductase (416 aa).

Belongs to the gamma-glutamyl phosphate reductase family.

The protein resides in the cytoplasm. It carries out the reaction L-glutamate 5-semialdehyde + phosphate + NADP(+) = L-glutamyl 5-phosphate + NADPH + H(+). The protein operates within amino-acid biosynthesis; L-proline biosynthesis; L-glutamate 5-semialdehyde from L-glutamate: step 2/2. In terms of biological role, catalyzes the NADPH-dependent reduction of L-glutamate 5-phosphate into L-glutamate 5-semialdehyde and phosphate. The product spontaneously undergoes cyclization to form 1-pyrroline-5-carboxylate. The protein is Gamma-glutamyl phosphate reductase of Vibrio parahaemolyticus serotype O3:K6 (strain RIMD 2210633).